The primary structure comprises 109 residues: Large ribosomal subunit protein uL22 (109 aa).

Belongs to the universal ribosomal protein uL22 family. Part of the 50S ribosomal subunit.

Functionally, this protein binds specifically to 23S rRNA; its binding is stimulated by other ribosomal proteins, e.g. L4, L17, and L20. It is important during the early stages of 50S assembly. It makes multiple contacts with different domains of the 23S rRNA in the assembled 50S subunit and ribosome. In terms of biological role, the globular domain of the protein is located near the polypeptide exit tunnel on the outside of the subunit, while an extended beta-hairpin is found that lines the wall of the exit tunnel in the center of the 70S ribosome. In Polaromonas naphthalenivorans (strain CJ2), this protein is Large ribosomal subunit protein uL22.